A 131-amino-acid polypeptide reads, in one-letter code: MMRSFKSTQEPSRQARGAQAEDRALAHLRRQGLEPVVRNYRCKGGEIDLVMRAPDGTLVFVEVRQRSGRGFGGAAASITPAKQRRVVLAARHYLATLARVPPCRFDVVALEPDRLEWLQHAFDADAAGAGS.

Over residues 1–12 (MMRSFKSTQEPS) the composition is skewed to polar residues. The tract at residues 1-21 (MMRSFKSTQEPSRQARGAQAE) is disordered.

It belongs to the UPF0102 family.

This is UPF0102 protein RALTA_A3032 from Cupriavidus taiwanensis (strain DSM 17343 / BCRC 17206 / CCUG 44338 / CIP 107171 / LMG 19424 / R1) (Ralstonia taiwanensis (strain LMG 19424)).